An 825-amino-acid chain; its full sequence is Arabinolytic transcriptional activator araR (825 aa).

Polar residues predominate over residues Met1–Asp17. The segment at Met1 to Trp28 is disordered. Residues Cys35–Cys61 constitute a DNA-binding region (zn(2)-C6 fungal-type). The tract at residues Ser117–Pro152 is disordered.

The protein belongs to the xlnR/xlr1 family. araR subfamily.

It localises to the nucleus. Functionally, transcriptional activator of the arabinanolytic system. Involved in the regulation of extracellular arabinanolytic genes and in the regulation of the intracellular activities of L-arabinose catabolic genes in the pentose catabolic pathway (PCP) in response to the presence of L-arabinose. The sequence is that of Arabinolytic transcriptional activator araR from Emericella nidulans (strain FGSC A4 / ATCC 38163 / CBS 112.46 / NRRL 194 / M139) (Aspergillus nidulans).